The chain runs to 241 residues: 3-dehydroquinate dehydratase (241 aa).

3-dehydroquinate-binding positions include 35–37 and R70; that span reads ELR. The active-site Proton donor/acceptor is H132. The active-site Schiff-base intermediate with substrate is the K159. 3-dehydroquinate-binding residues include R201 and Q224.

It belongs to the type-I 3-dehydroquinase family. In terms of assembly, homodimer.

It carries out the reaction 3-dehydroquinate = 3-dehydroshikimate + H2O. It functions in the pathway metabolic intermediate biosynthesis; chorismate biosynthesis; chorismate from D-erythrose 4-phosphate and phosphoenolpyruvate: step 3/7. In terms of biological role, involved in the third step of the chorismate pathway, which leads to the biosynthesis of aromatic amino acids. Catalyzes the cis-dehydration of 3-dehydroquinate (DHQ) and introduces the first double bond of the aromatic ring to yield 3-dehydroshikimate. In Staphylococcus carnosus (strain TM300), this protein is 3-dehydroquinate dehydratase.